Consider the following 118-residue polypeptide: Large ribosomal subunit protein eL22 (118 aa).

The protein belongs to the eukaryotic ribosomal protein eL22 family.

The protein is Large ribosomal subunit protein eL22 (RPL22) of Tetrahymena thermophila (strain SB210).